The chain runs to 221 residues: Alpha-ketoglutarate-dependent dioxygenase alkB homolog 7, mitochondrial (221 aa).

The N-terminal 23 residues, Met-1–Ala-23, are a transit peptide targeting the mitochondrion. Fe cation is bound by residues His-121 and Asp-123. A 2-oxoglutarate-binding site is contributed by Tyr-165. His-177 provides a ligand contact to Fe cation. 2-oxoglutarate contacts are provided by residues Arg-197–Ser-199 and Arg-203.

The protein belongs to the alkB family. Requires Fe(2+) as cofactor.

The protein localises to the mitochondrion matrix. Functionally, may function as protein hydroxylase; can catalyze auto-hydroxylation at Leu-110 (in vitro), but this activity may be due to the absence of the true substrate. Required to induce programmed necrosis in response to DNA damage caused by cytotoxic alkylating agents. Acts by triggering the collapse of mitochondrial membrane potential and loss of mitochondrial function that leads to energy depletion and cell death. ALKBH7-mediated necrosis is probably required to prevent the accumulation of cells with DNA damage. Does not display DNA demethylase activity. Involved in fatty acid metabolism. The protein is Alpha-ketoglutarate-dependent dioxygenase alkB homolog 7, mitochondrial (ALKBH7) of Bos taurus (Bovine).